The chain runs to 222 residues: DNA ADP-ribosyl transferase (222 aa).

Positions 12–209 (TLIYHITHLN…PVRVRRSWYY (198 aa)) constitute a DarT domain. Residues 16-18 (HIT), G25, and L33 contribute to the NAD(+) site. Residues 38–56 (RPPTQQNVAYGHIQAHRAQ) form an NAD(+)-binding element region. A DNA-binding region spans residues 47-53 (YGHIQAH). R54 is a binding site for NAD(+). R54 serves as the catalytic Proton acceptor. 3 consecutive DNA-binding regions follow at residues 78–83 (RSPMLY), 148–151 (SYWA), and 154–158 (REKKQ). The interval 119–160 (TDRHAAVQYVCFFHKLEHLKALDWQAIQASYWANVREKKQAE) is ADP-ribosylating turn-turn loop. Residue E160 is part of the active site.

It belongs to the DarT ADP-ribosyltransferase family. Interacts with cognate antitoxin DarG (via C-terminus); this heterodimeric complex neutralizes the toxic effect of DarT by preventing ssDNA binding to DarT and consequently inactivating the toxin by direct protein-protein interactions.

It carries out the reaction a thymidine in DNA + NAD(+) = an N-(ADP-alpha-D-ribosyl)-thymidine in DNA + nicotinamide + H(+). Its function is as follows. Toxic component of the hybrid type II/IV toxin-antitoxin (TA) system DarTG, which plays a crucial role in controlling bacterial growth and bacteriophage infection. Its toxic effect is neutralized by cognate antitoxin DarG. In case of phage infection, DarT toxin ADP-ribosylates DNA, which inhibits both viral DNA and RNA synthesis and leads to abortive infection. ADP-ribosylates ssDNA on the second thymidine of the consensus sequence 5'-TNTC-3'; the protein does not auto-modify. Has no activity on dsDNA in vitro. This leads to a decrease in DNA replication. Upon expression in E.coli inhibits cell growth, colony formation and induces the SOS response. Expression leads to bacteriostasis; however if cells grow over an hour in the presence of toxin, growth is no longer restored on antitoxin-inducing plates. In E.coli ADP-ribosylates genomic DNA (gDNA), which induces RecA expression (a marker for DNA damage). The sequence is that of DNA ADP-ribosyl transferase from Thermus aquaticus (strain ATCC BAA-2747 / Y51MC23).